A 377-amino-acid chain; its full sequence is Phospho-N-acetylmuramoyl-pentapeptide-transferase (377 aa).

10 helical membrane-spanning segments follow: residues 27–47 (TAFA…YVIE), 71–91 (GTPT…TLLW), 94–114 (LSDP…AIGF), 139–159 (ILAS…GSYS), 182–202 (VPHL…IVIV), 216–236 (GLAI…TYVS), 252–272 (MVGE…GFLW), 280–300 (IFMG…VAVV), 305–325 (LLLP…ILQV), and 354–374 (KVIV…LTTL).

The protein belongs to the glycosyltransferase 4 family. MraY subfamily. It depends on Mg(2+) as a cofactor.

It is found in the cell inner membrane. The enzyme catalyses UDP-N-acetyl-alpha-D-muramoyl-L-alanyl-gamma-D-glutamyl-meso-2,6-diaminopimeloyl-D-alanyl-D-alanine + di-trans,octa-cis-undecaprenyl phosphate = di-trans,octa-cis-undecaprenyl diphospho-N-acetyl-alpha-D-muramoyl-L-alanyl-D-glutamyl-meso-2,6-diaminopimeloyl-D-alanyl-D-alanine + UMP. It functions in the pathway cell wall biogenesis; peptidoglycan biosynthesis. In terms of biological role, catalyzes the initial step of the lipid cycle reactions in the biosynthesis of the cell wall peptidoglycan: transfers peptidoglycan precursor phospho-MurNAc-pentapeptide from UDP-MurNAc-pentapeptide onto the lipid carrier undecaprenyl phosphate, yielding undecaprenyl-pyrophosphoryl-MurNAc-pentapeptide, known as lipid I. The sequence is that of Phospho-N-acetylmuramoyl-pentapeptide-transferase from Acidobacterium capsulatum (strain ATCC 51196 / DSM 11244 / BCRC 80197 / JCM 7670 / NBRC 15755 / NCIMB 13165 / 161).